We begin with the raw amino-acid sequence, 466 residues long: Methylenetetrahydrofolate--tRNA-(uracil-5-)-methyltransferase TrmFO (466 aa).

14–19 (GGGLAG) contacts FAD.

Belongs to the MnmG family. TrmFO subfamily. FAD serves as cofactor.

The protein resides in the cytoplasm. It carries out the reaction uridine(54) in tRNA + (6R)-5,10-methylene-5,6,7,8-tetrahydrofolate + NADH + H(+) = 5-methyluridine(54) in tRNA + (6S)-5,6,7,8-tetrahydrofolate + NAD(+). The enzyme catalyses uridine(54) in tRNA + (6R)-5,10-methylene-5,6,7,8-tetrahydrofolate + NADPH + H(+) = 5-methyluridine(54) in tRNA + (6S)-5,6,7,8-tetrahydrofolate + NADP(+). Functionally, catalyzes the folate-dependent formation of 5-methyl-uridine at position 54 (M-5-U54) in all tRNAs. This is Methylenetetrahydrofolate--tRNA-(uracil-5-)-methyltransferase TrmFO from Brucella abortus (strain 2308).